Reading from the N-terminus, the 2276-residue chain is MTGHEFKSWILELREILREIKNSHYFLDSWTQFNSVGSFIHIFFHQERFIKLFDSRIWSILLSHNSQGSTSNRYFTIKGVILFGVAVLIYRINNRNMVERKNLYLIGLLPIPMNSIGPRNDTLEESVGSSNINRLIVSLLYLPKGKKIYESSFLNPKESTWVLPITKKCSMPESNWGSRWWRDWIGKKSDSSCKISNETVAGIEILFKEKDLKYLEFVFVYYRDDPIRKDHDWEFFDRLSLRKRQNRINLNSGPLFEILVKHWICYLMSAFREKIPIEVEGFFKQQGAGSTIQSNDIEHVSHLFSRNKWAISLQNCAQFHMWQFRQDLFVSWGKNPPESDFLRNVSRENLIWLDNVWLVNKDRFFRKVRNVSSNIQYDSTRSSFVQVRDSSQLKGSSDQFRDHFDSISNEDSEYHTLLNQREIQQLKERSILWDPSFLQTEGTEIESNRFPKCLSGSSSMSRLFTEREKQMINHMLPEEIEELIGNPTRSVRSFFSDRWSELHLGSNPTERSTRDQKLLKKQQDLSFLRRSENKEMVNLFKIITYLQNTVSIHPISLDSGCDMVPKDEPDMDSSNKISFLNKNPFFDLFHLFHDRNRGGYTLHHDFESEERFQEMADLFTLSITEPDLVYHKRFAFSIDSYGLDPKQFLNGVFNSRYEWKTTSLLVLLVLFPIFYEENESFYRRIRKKRVRISCGNDLEEPKPKIVVFASNNRMEAVNQYRLIRNLIQIQHSTHRYIRNVLNRFFLMNRSDRNFEYGIQRDQIRKDTLNHRTLMKYTINQHLSNLKKSQKRWFDPLIFFSRTERSMNRDPDAYRYKWSTGSNNFQEHLEHFVSEQKSRFQVVFDRLRINPYSIDWSEVIDKKDLSKPLRFFLSKLLLFLSNSLPFLFVSFGNIPIHRSEIYIYELKGPNDPQFLESIGLQIVHLKKLKPFLLDDHETCQKSKFLINGGTISPFLFNKIPKWMIDSFHTRKNRRKSFDNTDSYFSMIFHDQYNWLNPVKSFHRSSLRSSFYKGNQLRFLNNPHHFCFYCNKRFPFYVEKARINNYDFTYGQFLNILFIRNKIFSLCVGKKKHAFWGRDTISAIESQVSNIFIPKAFPQSGDETYNLYKSFHFPSRANPFVRRAIYSIAGISGTPLTEGQIVNFERTYCQPLSDMNLSDSEGKNLYQYLNFNSNMGLIHTPCSEKYLPSEKRKKRSLCLKKCVEKGQMYRTFQRDSAYSTLSKWNLFQTYMPWFLTSTGYRYLKFLFLDTFSDLLPILSSSQKFVSIFHDIMHGSDISWRILQKKFCLPQWNLISEISSKCFHNLLLSEEMIHRNNESPLISTHLTNVREFLYAILFLLLVAAYLVCTHLLFVFGASSELQTEFEKVKSLMIPSSMIELRKILDRYPTSEPNSFWLKNLFLVALKQLGDSLGGNMLLGGGPAYGVKSIRSKKKYLNINLIDIIDLISIIPNPINRITFSRNTRHLSHTSKEIYSLIRKRKNVNGDWIDDKIESWVANSDSIDDEKREFLVQFSTLTTEKRIDQILLSLTHSDHLSKNDSGYQMIEQPGAIYLRDLVDIHKKYLMNYEFNTSSLAERRIFLAHYQTITYSQTSCGANSFHFPSHGKPFSLRLALSLSRGILVIGSIGTGRSYLVKYLAKNSYLPFITVFLNKFLDNKSQGFDDIDIDDIDASDDIDASDDILDMELELLTSMNALTMNMMPEDEDRLYITLQFELAKAMSPCIIWIPNIHDLDVNESNYFSLGLLVNLLSRDYETRNILVIASTHIPQKADPALIAPNKLNTCIKIRRLLIPQQRKHFFTLSYTRGFHLEKKMFHTNGFGSITMGSNARDLVALTNEALSISITQKKSIIDTNTIRSALHRQIWDLRSQVRSVQDHGILFYQIGRAVAQNVLLSNCPIDPISIYMKKKSCNEVDYYLYNWYFELGTSMKKLTILLYLLSCSAGSVTQDLWSLPGPDEKNGITPYGLVENDSGLVRGLLEVEGALVGSSRTCSQFDKDRVTLLLRPEPRNPLDMMQKGSCSILDQRFLYEKDESEFEEGEGEGALDRQQIEEDLFNHIVWAPRIWRPWGFLFDCIERPNELGFPYWSRSFRGKRIIYDEEDELQENDSEFLQSGTVQYQTRDRSSKEQGLFRISQFIWDPADPLFFLFKAQPFVSVFSHRELFADEEMSKGLLTPQTNPPTSLYKRWFIKKTQEKHFELLINRQRWLRTNRSLSNGSFRSNTLSESYQYLSNLFLSNGTLLDQMTKALLRKRWLFPDEMQIGFMEQEKDFPFLSRKDMWP.

ATP is bound at residue 1621-1628; the sequence is GSIGTGRS.

The protein belongs to the Ycf2 family.

It is found in the plastid. The protein resides in the chloroplast stroma. Probable ATPase of unknown function. Its presence in a non-photosynthetic plant (Epifagus virginiana) and experiments in tobacco indicate that it has an essential function which is probably not related to photosynthesis. The protein is Protein Ycf2 of Guizotia abyssinica (Niger).